We begin with the raw amino-acid sequence, 184 residues long: Ribosome maturation factor RimM (184 aa).

Residues 112–184 enclose the PRC barrel domain; the sequence is TDSYYWIDLI…SNKTISLDWQ (73 aa).

This sequence belongs to the RimM family. As to quaternary structure, binds ribosomal protein uS19.

It is found in the cytoplasm. In terms of biological role, an accessory protein needed during the final step in the assembly of 30S ribosomal subunit, possibly for assembly of the head region. Essential for efficient processing of 16S rRNA. May be needed both before and after RbfA during the maturation of 16S rRNA. It has affinity for free ribosomal 30S subunits but not for 70S ribosomes. The protein is Ribosome maturation factor RimM of Polynucleobacter necessarius subsp. necessarius (strain STIR1).